A 182-amino-acid chain; its full sequence is Fatty-acid and retinol-binding protein 2 (182 aa).

The N-terminal stretch at 1–17 (MIRAFLVVALASVAVFS) is a signal peptide. 2 coiled-coil regions span residues 46-73 (LKAI…EEEF) and 131-152 (TLDS…LSDD).

Belongs to the fatty-acid and retinol-binding protein (FARBP) family.

The protein resides in the secreted. Probably binds lipids. This chain is Fatty-acid and retinol-binding protein 2 (far-2), found in Caenorhabditis elegans.